We begin with the raw amino-acid sequence, 262 residues long: MAVGKNKRISKGRKGGKKKAVDPFSKKDWYDVKAPGSFTNRNVGKTLVSRTQGTKIASEGLKHRVFEVSLADLQNDEDNAYRKIRLRAEDVQGRNVLTQFWGMDFTTDKLRSLVKKWQTLIEAHVDVKTTDGYTLRMFCIAFTKRRANQVKRTCYAQSSQIRQIRRKMSEIMVKEASSCDLKELVAKFIPEAIGREIEKATQGIYPLQNVFIRKVKILKAPKFDLGKLMEVHGDYTAEDVGVKVDRPADETMVEEPTEIIGA.

A compositionally biased stretch (basic residues) spans 1-18 (MAVGKNKRISKGRKGGKK). The disordered stretch occupies residues 1–21 (MAVGKNKRISKGRKGGKKKAV).

Belongs to the eukaryotic ribosomal protein eS1 family. Component of the small ribosomal subunit. Mature ribosomes consist of a small (40S) and a large (60S) subunit. The 40S subunit contains about 33 different proteins and 1 molecule of RNA (18S). The 60S subunit contains about 49 different proteins and 3 molecules of RNA (25S, 5.8S and 5S).

The protein localises to the cytoplasm. In Arabidopsis thaliana (Mouse-ear cress), this protein is Small ribosomal subunit protein eS1y.